We begin with the raw amino-acid sequence, 404 residues long: Ubiquitin-like modifier-activating enzyme 5 (404 aa).

Ser45 is modified (phosphoserine). Residues Gly83, Asp104, Lys127, Asn150, and Asn184 each contribute to the ATP site. Cys226 and Cys229 together coordinate Zn(2+). The Glycyl thioester intermediate role is filled by Cys250. Residues Cys303 and Cys308 each contribute to the Zn(2+) site. A UFM1-interacting sequence (UIS) motif is present at residues 334-346 (IIHEDNEWGIELV). The tract at residues 347–377 (SEVSEEELKNFSGPVPDLPEGITVAYTIPKK) is linker. Phosphoserine occurs at positions 358 and 393. A UFC1-binding sequence (UFC) motif is present at residues 389–404 (DSGESLEDLMAKMKNM).

This sequence belongs to the ubiquitin-activating E1 family. UBA5 subfamily. In terms of assembly, homodimer; homodimerization is required for UFM1 activation. Interacts (via UIS motif) with UFM1; binds UFM1 via a trans-binding mechanism in which UFM1 interacts with distinct sites in both subunits of the UBA5 homodimer. Interacts (via C-terminus) with UFC1. Interacts (via UIS motif) with GABARAPL2 and, with lower affinity, with GABARAP and GABARAPL1. In terms of tissue distribution, widely expressed.

It is found in the cytoplasm. The protein localises to the nucleus. It localises to the endoplasmic reticulum membrane. Its subcellular location is the golgi apparatus. E1-like enzyme which specifically catalyzes the first step in ufmylation. Activates UFM1 by first adenylating its C-terminal glycine residue with ATP, and thereafter linking this residue to the side chain of a cysteine residue in E1, yielding a UFM1-E1 thioester and free AMP. Activates UFM1 via a trans-binding mechanism, in which UFM1 interacts with distinct sites in both subunits of the UBA5 homodimer. Trans-binding also promotes stabilization of the UBA5 homodimer, and enhances ATP-binding. Transfer of UFM1 from UBA5 to the E2-like enzyme UFC1 also takes place using a trans mechanism. Ufmylation plays a key role in various processes, such as ribosome recycling, response to DNA damage, interferon response or reticulophagy (also called ER-phagy). Ufmylation is essential for erythroid differentiation of both megakaryocytes and erythrocytes. The sequence is that of Ubiquitin-like modifier-activating enzyme 5 from Homo sapiens (Human).